The following is a 260-amino-acid chain: MSEDVIAEIKRDYIYSLANQGDRADGRKFDEFRAISVETGVINKAEGSARVKIGDSQVVVGVKIQPGEPFPDTPDSGVIITNLELVPLASPTFESGPPREDAIELARVVDRGVRESGAIDLSKLCIESGQKVWMVFIDVHVLDHDGNLMDAASLGAIAALKATKIPNSKFGLGEDVKLPLNDVPIGVTAVNIGGAIMLDPSLDEESVAPCKLTVITNKEGAISGMQKSGVGTLTPDQINHIIRLAKEKANVLREKLEGIQ.

It belongs to the RNase PH family. Rrp42 subfamily. As to quaternary structure, component of the archaeal exosome complex. Forms a hexameric ring-like arrangement composed of 3 Rrp41-Rrp42 heterodimers. The hexameric ring associates with a trimer of Rrp4 and/or Csl4 subunits.

It is found in the cytoplasm. Non-catalytic component of the exosome, which is a complex involved in RNA degradation. Contributes to the structuring of the Rrp41 active site. This Methanocella arvoryzae (strain DSM 22066 / NBRC 105507 / MRE50) protein is Exosome complex component Rrp42.